The sequence spans 354 residues: Histidinol-phosphate aminotransferase (354 aa).

Position 222 is an N6-(pyridoxal phosphate)lysine (K222).

Belongs to the class-II pyridoxal-phosphate-dependent aminotransferase family. Histidinol-phosphate aminotransferase subfamily. As to quaternary structure, homodimer. Pyridoxal 5'-phosphate serves as cofactor.

It carries out the reaction L-histidinol phosphate + 2-oxoglutarate = 3-(imidazol-4-yl)-2-oxopropyl phosphate + L-glutamate. The protein operates within amino-acid biosynthesis; L-histidine biosynthesis; L-histidine from 5-phospho-alpha-D-ribose 1-diphosphate: step 7/9. The chain is Histidinol-phosphate aminotransferase from Leuconostoc citreum (strain KM20).